We begin with the raw amino-acid sequence, 455 residues long: Bifunctional protein GlmU (455 aa).

A pyrophosphorylase region spans residues 1–232 (MASTTGALIL…DPNLLGVNNP (232 aa)). UDP-N-acetyl-alpha-D-glucosamine is bound by residues 10-13 (LAAG), K24, Q75, and 80-81 (GT). D106 is a binding site for Mg(2+). Positions 141, 155, 172, and 230 each coordinate UDP-N-acetyl-alpha-D-glucosamine. N230 serves as a coordination point for Mg(2+). The tract at residues 233–253 (AELIRSEALLRTRLVIGHIEG) is linker. The interval 254-455 (GVLIHAPETV…QTNLPRKPKA (202 aa)) is N-acetyltransferase. 2 residues coordinate UDP-N-acetyl-alpha-D-glucosamine: R336 and K354. Residue H366 is the Proton acceptor of the active site. Positions 369 and 380 each coordinate UDP-N-acetyl-alpha-D-glucosamine. Residues A383, 389 to 390 (NY), S408, A426, and R443 each bind acetyl-CoA.

The protein in the N-terminal section; belongs to the N-acetylglucosamine-1-phosphate uridyltransferase family. It in the C-terminal section; belongs to the transferase hexapeptide repeat family. Homotrimer. The cofactor is Mg(2+).

The protein resides in the cytoplasm. It carries out the reaction alpha-D-glucosamine 1-phosphate + acetyl-CoA = N-acetyl-alpha-D-glucosamine 1-phosphate + CoA + H(+). It catalyses the reaction N-acetyl-alpha-D-glucosamine 1-phosphate + UTP + H(+) = UDP-N-acetyl-alpha-D-glucosamine + diphosphate. It functions in the pathway nucleotide-sugar biosynthesis; UDP-N-acetyl-alpha-D-glucosamine biosynthesis; N-acetyl-alpha-D-glucosamine 1-phosphate from alpha-D-glucosamine 6-phosphate (route II): step 2/2. Its pathway is nucleotide-sugar biosynthesis; UDP-N-acetyl-alpha-D-glucosamine biosynthesis; UDP-N-acetyl-alpha-D-glucosamine from N-acetyl-alpha-D-glucosamine 1-phosphate: step 1/1. It participates in bacterial outer membrane biogenesis; LPS lipid A biosynthesis. Functionally, catalyzes the last two sequential reactions in the de novo biosynthetic pathway for UDP-N-acetylglucosamine (UDP-GlcNAc). The C-terminal domain catalyzes the transfer of acetyl group from acetyl coenzyme A to glucosamine-1-phosphate (GlcN-1-P) to produce N-acetylglucosamine-1-phosphate (GlcNAc-1-P), which is converted into UDP-GlcNAc by the transfer of uridine 5-monophosphate (from uridine 5-triphosphate), a reaction catalyzed by the N-terminal domain. The protein is Bifunctional protein GlmU of Nitratidesulfovibrio vulgaris (strain ATCC 29579 / DSM 644 / CCUG 34227 / NCIMB 8303 / VKM B-1760 / Hildenborough) (Desulfovibrio vulgaris).